Here is a 123-residue protein sequence, read N- to C-terminus: Small ribosomal subunit protein uS12 (123 aa).

A 3-methylthioaspartic acid modification is found at D89.

Belongs to the universal ribosomal protein uS12 family. Part of the 30S ribosomal subunit. Contacts proteins S8 and S17. May interact with IF1 in the 30S initiation complex.

In terms of biological role, with S4 and S5 plays an important role in translational accuracy. Its function is as follows. Interacts with and stabilizes bases of the 16S rRNA that are involved in tRNA selection in the A site and with the mRNA backbone. Located at the interface of the 30S and 50S subunits, it traverses the body of the 30S subunit contacting proteins on the other side and probably holding the rRNA structure together. The combined cluster of proteins S8, S12 and S17 appears to hold together the shoulder and platform of the 30S subunit. This chain is Small ribosomal subunit protein uS12, found in Geotalea uraniireducens (strain Rf4) (Geobacter uraniireducens).